The primary structure comprises 495 residues: Fibronectin type III and SPRY domain-containing protein 1 (495 aa).

The stretch at 4-99 (QKESLRKIIT…ALESSEELLE (96 aa)) forms a coiled coil. A COS domain is found at 105–162 (LCSSENDSFTQAAKDIKDSVTMAPAFRLSLKAKASDSMNHMMVDFTHERNLLQSITFL). A Fibronectin type-III domain is found at 164-268 (VPATPEIHVA…EPVTLETHAF (105 aa)). The 196-residue stretch at 281–476 (LKVEDLSVEW…VQTGLQVPSI (196 aa)) folds into the B30.2/SPRY domain. A disordered region spans residues 306-332 (KNRTNSPMHSPARTAMMSPKRAPSARV). Ser490 carries the post-translational modification Phosphoserine.

Oligomerization is required for binding to microtubules.

It is found in the cytoplasm. The protein localises to the cytoskeleton. The protein resides in the microtubule organizing center. Its subcellular location is the centrosome. It localises to the nucleus. It is found in the cleavage furrow. May be involved in microtubule organization and stabilization. The chain is Fibronectin type III and SPRY domain-containing protein 1 (fsd1) from Danio rerio (Zebrafish).